The primary structure comprises 138 residues: Histone H2B.3 (138 aa).

Composition is skewed to basic and acidic residues over residues 1-18 (MAPK…EKTT) and 26-38 (EKRP…GGDK). The disordered stretch occupies residues 1–46 (MAPKAEKKPVAEKAEKTTAAKKTKAEKRPPASKEGGDKKGKKKSKK). N6-acetyllysine occurs at positions 7 and 27. Residue Lys134 forms a Glycyl lysine isopeptide (Lys-Gly) (interchain with G-Cter in ubiquitin) linkage.

Belongs to the histone H2B family. As to quaternary structure, the nucleosome is a histone octamer containing two molecules each of H2A, H2B, H3 and H4 assembled in one H3-H4 heterotetramer and two H2A-H2B heterodimers. The octamer wraps approximately 147 bp of DNA. In terms of processing, can be acetylated to form H2BK6ac and H2BK33ac. Post-translationally, monoubiquitinated to form H2BK143ub1; may give a specific tag for epigenetic transcriptional activation.

It localises to the nucleus. The protein localises to the chromosome. Its function is as follows. Core component of nucleosome. Nucleosomes wrap and compact DNA into chromatin, limiting DNA accessibility to the cellular machineries which require DNA as a template. Histones thereby play a central role in transcription regulation, DNA repair, DNA replication and chromosomal stability. DNA accessibility is regulated via a complex set of post-translational modifications of histones, also called histone code, and nucleosome remodeling. This is Histone H2B.3 from Triticum aestivum (Wheat).